The following is a 445-amino-acid chain: Protein PRRC1 (445 aa).

2 disordered regions span residues 1-71 (MMEE…PSAP) and 105-167 (PPVS…TGLL). The span at 27–49 (MSSTPVPLAATSSFSSPNVSSME) shows a compositional bias: polar residues. Pro residues predominate over residues 59–71 (PQPPLPPVRPSAP). Phosphoserine is present on residues S209 and S408.

The protein belongs to the PRRC1 family. As to quaternary structure, interacts with PRKAR1A; resulting in PKA activation. As to expression, ubiquitously expressed with higher expression in kidney, liver and placenta. Detected in embryonic kidney cells (HEK293 cells) (at protein level). Specifically expressed in liver.

The protein localises to the golgi apparatus. The protein resides in the cytoplasm. Functionally, may act as a regulator of the protein kinase A (PKA) activity during embryonic development. The chain is Protein PRRC1 (PRRC1) from Homo sapiens (Human).